The primary structure comprises 682 residues: Protein SPT2 homolog (682 aa).

The segment at 1-569 is important for interaction with DNA; that stretch reads MDFREILLIA…PLLSGYRSAQ (569 aa). Lys-37 participates in a covalent cross-link: Glycyl lysine isopeptide (Lys-Gly) (interchain with G-Cter in SUMO2). Positions 46 to 82 form a coiled coil; it reads AFLRRKEEELRQKALEEKKRKEELVKKRIELKHDKKA. A disordered region spans residues 80–170; that stretch reads KKARAMAKRT…SAPSPMNFTD (91 aa). Basic and acidic residues predominate over residues 101 to 111; that stretch reads VEEKTKKKQLV. The segment covering 121–131 has biased composition (acidic residues); that stretch reads QEYDVEEEDFI. Over residues 156 to 165 the composition is skewed to low complexity; that stretch reads KAPLKSAPSP. Lys-186 participates in a covalent cross-link: Glycyl lysine isopeptide (Lys-Gly) (interchain with G-Cter in SUMO2). Positions 187 to 208 are enriched in basic and acidic residues; that stretch reads VVKKAEDRPLTAEELREREFLE. Disordered stretches follow at residues 187–533 and 549–595; these read VVKK…TKPR and RSSN…DEYD. Composition is skewed to polar residues over residues 267–280, 317–334, 371–393, 400–409, and 419–432; these read STASEKQAALSSPK, STCSPSVPKTPASGTQKS, PGSNSGSAPGQPNPGTARPTLSS, QNGSSSSGPE, and ASNSHLSGRTLNGT. At Ser-277 the chain carries Phosphoserine. 2 stretches are compositionally biased toward low complexity: residues 435–460 and 490–504; these read PGRPASSSSGPGRPISGSAGSGRPVG and SGPGRSISGSIPAGR. An important for interaction with histones region spans residues 570–682; sequence GPQRLPFPTG…RRKAKKLKRH (113 aa). Lys-581 is modified (N6-acetyllysine). Over residues 586–595 the composition is skewed to acidic residues; that stretch reads YEEDDDDEYD. The residue at position 596 (Ser-596) is a Phosphoserine. 2 stretches are compositionally biased toward basic and acidic residues: residues 641-652 and 663-672; these read SWKEQQKEEAKS and EMRREEEELK. The segment at 641 to 682 is disordered; sequence SWKEQQKEEAKSLRLGMQEDLEEMRREEEELKRRKAKKLKRH. The stretch at 642 to 682 forms a coiled coil; it reads WKEQQKEEAKSLRLGMQEDLEEMRREEEELKRRKAKKLKRH. The segment covering 673–682 has biased composition (basic residues); sequence RRKAKKLKRH.

It belongs to the SPT2 family. Interacts with histones. Interacts with a heterotetrameric complex formed by histone H3 and H4, especially when the histone tetramer is not bound to DNA. Interacts with histone H3.3.

Its subcellular location is the nucleus. It is found in the nucleolus. In terms of biological role, histone chaperone that stabilizes pre-existing histone tetramers and regulates replication-independent histone exchange on chromatin. Required for normal chromatin refolding in the coding region of transcribed genes, and for the suppression of spurious transcription. Binds DNA and histones and promotes nucleosome assembly (in vitro). Facilitates formation of tetrameric histone complexes containing histone H3 and H4. Modulates RNA polymerase 1-mediated transcription. Binds DNA, with a preference for branched DNA species, such as Y-form DNA and Holliday junction DNA. The polypeptide is Protein SPT2 homolog (Spty2d1) (Mus musculus (Mouse)).